Reading from the N-terminus, the 98-residue chain is Large ribosomal subunit protein uL23 (98 aa).

It belongs to the universal ribosomal protein uL23 family. Part of the 50S ribosomal subunit. Contacts protein L29, and trigger factor when it is bound to the ribosome.

In terms of biological role, one of the early assembly proteins it binds 23S rRNA. One of the proteins that surrounds the polypeptide exit tunnel on the outside of the ribosome. Forms the main docking site for trigger factor binding to the ribosome. The chain is Large ribosomal subunit protein uL23 from Nitrosococcus oceani (strain ATCC 19707 / BCRC 17464 / JCM 30415 / NCIMB 11848 / C-107).